A 417-amino-acid polypeptide reads, in one-letter code: NADH-quinone oxidoreductase subunit D (417 aa).

It belongs to the complex I 49 kDa subunit family. In terms of assembly, NDH-1 is composed of 14 different subunits. Subunits NuoB, C, D, E, F, and G constitute the peripheral sector of the complex.

It localises to the cell inner membrane. It catalyses the reaction a quinone + NADH + 5 H(+)(in) = a quinol + NAD(+) + 4 H(+)(out). NDH-1 shuttles electrons from NADH, via FMN and iron-sulfur (Fe-S) centers, to quinones in the respiratory chain. The immediate electron acceptor for the enzyme in this species is believed to be ubiquinone. Couples the redox reaction to proton translocation (for every two electrons transferred, four hydrogen ions are translocated across the cytoplasmic membrane), and thus conserves the redox energy in a proton gradient. In Ruthia magnifica subsp. Calyptogena magnifica, this protein is NADH-quinone oxidoreductase subunit D.